A 100-amino-acid polypeptide reads, in one-letter code: Protamine-2 (100 aa).

Residues 1-45 (MVRYHVRSPSERPHREYRQLVNGQEQGRHGQEEQGMSAEGVEGYG) form a disordered region. Phosphoserine is present on residues Ser-8, Ser-10, and Ser-37. Positions 8–18 (SPSERPHREYR) are enriched in basic and acidic residues.

The protein belongs to the protamine P2 family. As to quaternary structure, interacts with TDRP. Proteolytic processing into mature chains is required for histone eviction during spermatogenesis. Transition proteins (TNP1 and TNP2) are required for processing. As to expression, testis.

It localises to the nucleus. Its subcellular location is the chromosome. Functionally, protamines substitute for histones in the chromatin of sperm during the haploid phase of spermatogenesis. They compact sperm DNA into a highly condensed, stable and inactive complex. This chain is Protamine-2 (PRM2), found in Alouatta seniculus (Red howler monkey).